Consider the following 543-residue polypeptide: 2,3-bisphosphoglycerate-independent phosphoglycerate mutase (543 aa).

Mn(2+) contacts are provided by aspartate 20 and serine 73. Serine 73 acts as the Phosphoserine intermediate in catalysis. Substrate is bound by residues histidine 134, 166–167 (RD), arginine 198, arginine 204, 278–281 (RGDR), and lysine 360. Mn(2+) is bound by residues aspartate 428, histidine 432, aspartate 469, histidine 470, and histidine 488.

The protein belongs to the BPG-independent phosphoglycerate mutase family. As to quaternary structure, monomer. Mn(2+) serves as cofactor.

It carries out the reaction (2R)-2-phosphoglycerate = (2R)-3-phosphoglycerate. It functions in the pathway carbohydrate degradation; glycolysis; pyruvate from D-glyceraldehyde 3-phosphate: step 3/5. Its function is as follows. Catalyzes the interconversion of 2-phosphoglycerate and 3-phosphoglycerate. The sequence is that of 2,3-bisphosphoglycerate-independent phosphoglycerate mutase from Rhodopirellula baltica (strain DSM 10527 / NCIMB 13988 / SH1).